We begin with the raw amino-acid sequence, 71 residues long: MKKTFYHYMMKHRAALFRNEISDLAEAMYDDLSFPKQSEDYDEISSYLELSGMLESMSIFDEAWDLYIQDR.

It belongs to the UPF0346 family.

The chain is UPF0346 protein BCB4264_A2283 from Bacillus cereus (strain B4264).